A 401-amino-acid polypeptide reads, in one-letter code: Imidazolonepropionase (401 aa).

Fe(3+) is bound by residues histidine 66 and histidine 68. Residues histidine 66 and histidine 68 each coordinate Zn(2+). Positions 75, 138, and 171 each coordinate 4-imidazolone-5-propanoate. Tyrosine 138 is a binding site for N-formimidoyl-L-glutamate. Histidine 236 is a binding site for Fe(3+). Position 236 (histidine 236) interacts with Zn(2+). Position 239 (glutamine 239) interacts with 4-imidazolone-5-propanoate. Aspartate 311 lines the Fe(3+) pocket. Aspartate 311 is a Zn(2+) binding site. Residues asparagine 313 and glycine 315 each contribute to the N-formimidoyl-L-glutamate site. A 4-imidazolone-5-propanoate-binding site is contributed by threonine 316.

It belongs to the metallo-dependent hydrolases superfamily. HutI family. Requires Zn(2+) as cofactor. It depends on Fe(3+) as a cofactor.

The protein localises to the cytoplasm. The catalysed reaction is 4-imidazolone-5-propanoate + H2O = N-formimidoyl-L-glutamate. It functions in the pathway amino-acid degradation; L-histidine degradation into L-glutamate; N-formimidoyl-L-glutamate from L-histidine: step 3/3. Its function is as follows. Catalyzes the hydrolytic cleavage of the carbon-nitrogen bond in imidazolone-5-propanoate to yield N-formimidoyl-L-glutamate. It is the third step in the universal histidine degradation pathway. This chain is Imidazolonepropionase, found in Pseudomonas putida (Arthrobacter siderocapsulatus).